Reading from the N-terminus, the 290-residue chain is N-acetylneuraminate lyase (290 aa).

2 residues coordinate aceneuramate: Ser44 and Thr45. Catalysis depends on Tyr133, which acts as the Proton donor. The active-site Schiff-base intermediate with substrate is Lys161. Positions 163, 185, 187, 188, and 204 each coordinate aceneuramate.

This sequence belongs to the DapA family. NanA subfamily. In terms of assembly, homotetramer.

It localises to the cytoplasm. The catalysed reaction is aceneuramate = aldehydo-N-acetyl-D-mannosamine + pyruvate. It functions in the pathway amino-sugar metabolism; N-acetylneuraminate degradation; D-fructose 6-phosphate from N-acetylneuraminate: step 1/5. In terms of biological role, catalyzes the reversible aldol cleavage of N-acetylneuraminic acid (sialic acid; Neu5Ac) to form pyruvate and N-acetylmannosamine (ManNAc) via a Schiff base intermediate. This is N-acetylneuraminate lyase from Fusobacterium nucleatum subsp. nucleatum (strain ATCC 25586 / DSM 15643 / BCRC 10681 / CIP 101130 / JCM 8532 / KCTC 2640 / LMG 13131 / VPI 4355).